Reading from the N-terminus, the 207-residue chain is Large ribosomal subunit protein bL25 (207 aa).

Residues 186-207 (SKPRGGAGAEGEADAEGEAAAE) form a disordered region. Over residues 196-207 (GEADAEGEAAAE) the composition is skewed to acidic residues.

It belongs to the bacterial ribosomal protein bL25 family. CTC subfamily. As to quaternary structure, part of the 50S ribosomal subunit; part of the 5S rRNA/L5/L18/L25 subcomplex. Contacts the 5S rRNA. Binds to the 5S rRNA independently of L5 and L18.

This is one of the proteins that binds to the 5S RNA in the ribosome where it forms part of the central protuberance. The polypeptide is Large ribosomal subunit protein bL25 (Methylobacillus flagellatus (strain ATCC 51484 / DSM 6875 / VKM B-1610 / KT)).